The following is a 200-amino-acid chain: Probable nicotinate-nucleotide adenylyltransferase (200 aa).

The protein belongs to the NadD family.

The enzyme catalyses nicotinate beta-D-ribonucleotide + ATP + H(+) = deamido-NAD(+) + diphosphate. The protein operates within cofactor biosynthesis; NAD(+) biosynthesis; deamido-NAD(+) from nicotinate D-ribonucleotide: step 1/1. Catalyzes the reversible adenylation of nicotinate mononucleotide (NaMN) to nicotinic acid adenine dinucleotide (NaAD). The polypeptide is Probable nicotinate-nucleotide adenylyltransferase (Clostridium tetani (strain Massachusetts / E88)).